The following is a 156-amino-acid chain: Small ribosomal subunit protein uS7 (156 aa).

Belongs to the universal ribosomal protein uS7 family. In terms of assembly, part of the 30S ribosomal subunit. Contacts proteins S9 and S11.

Its function is as follows. One of the primary rRNA binding proteins, it binds directly to 16S rRNA where it nucleates assembly of the head domain of the 30S subunit. Is located at the subunit interface close to the decoding center, probably blocks exit of the E-site tRNA. The sequence is that of Small ribosomal subunit protein uS7 from Anaeromyxobacter dehalogenans (strain 2CP-1 / ATCC BAA-258).